The sequence spans 863 residues: Protein ARG5,6, mitochondrial (863 aa).

Residues methionine 1–serine 65 constitute a mitochondrion transit peptide. In terms of domain architecture, N-acetyltransferase spans lysine 353–serine 505. Position 359 is a phosphoserine (serine 359). Residue cysteine 675 is part of the active site.

It in the N-terminal section; belongs to the acetylglutamate kinase family. In the C-terminal section; belongs to the NAGSA dehydrogenase family. Post-translationally, the protein precursor is cleaved into the two biologically active enzymes, the kinase and the reductase.

It localises to the mitochondrion. The catalysed reaction is N-acetyl-L-glutamate 5-semialdehyde + phosphate + NADP(+) = N-acetyl-L-glutamyl 5-phosphate + NADPH + H(+). The enzyme catalyses N-acetyl-L-glutamate + ATP = N-acetyl-L-glutamyl 5-phosphate + ADP. Its pathway is amino-acid biosynthesis; L-arginine biosynthesis; N(2)-acetyl-L-ornithine from L-glutamate: step 2/4. It participates in amino-acid biosynthesis; L-arginine biosynthesis; N(2)-acetyl-L-ornithine from L-glutamate: step 3/4. With respect to regulation, the kinase activity is inhibited by arginine. This Saccharomyces cerevisiae (strain ATCC 204508 / S288c) (Baker's yeast) protein is Protein ARG5,6, mitochondrial (ARG5,6).